The chain runs to 329 residues: Malate dehydrogenase (329 aa).

12 to 18 (GAAGQIG) is a binding site for NAD(+). Positions 95 and 101 each coordinate substrate. Residues asparagine 108, glutamine 115, and 132-134 (VGN) contribute to the NAD(+) site. Substrate-binding residues include asparagine 134 and arginine 165. Histidine 190 serves as the catalytic Proton acceptor.

Belongs to the LDH/MDH superfamily. MDH type 2 family.

It catalyses the reaction (S)-malate + NAD(+) = oxaloacetate + NADH + H(+). In terms of biological role, catalyzes the reversible oxidation of malate to oxaloacetate. In Polynucleobacter asymbioticus (strain DSM 18221 / CIP 109841 / QLW-P1DMWA-1) (Polynucleobacter necessarius subsp. asymbioticus), this protein is Malate dehydrogenase.